Reading from the N-terminus, the 480-residue chain is Probable glycine dehydrogenase (decarboxylating) subunit 2 (480 aa).

Lysine 265 carries the N6-(pyridoxal phosphate)lysine modification.

This sequence belongs to the GcvP family. C-terminal subunit subfamily. In terms of assembly, the glycine cleavage system is composed of four proteins: P, T, L and H. In this organism, the P 'protein' is a heterodimer of two subunits. The cofactor is pyridoxal 5'-phosphate.

It carries out the reaction N(6)-[(R)-lipoyl]-L-lysyl-[glycine-cleavage complex H protein] + glycine + H(+) = N(6)-[(R)-S(8)-aminomethyldihydrolipoyl]-L-lysyl-[glycine-cleavage complex H protein] + CO2. Its function is as follows. The glycine cleavage system catalyzes the degradation of glycine. The P protein binds the alpha-amino group of glycine through its pyridoxal phosphate cofactor; CO(2) is released and the remaining methylamine moiety is then transferred to the lipoamide cofactor of the H protein. The polypeptide is Probable glycine dehydrogenase (decarboxylating) subunit 2 (Thermosipho africanus (strain TCF52B)).